Here is a 158-residue protein sequence, read N- to C-terminus: 6,7-dimethyl-8-ribityllumazine synthase (158 aa).

5-amino-6-(D-ribitylamino)uracil contacts are provided by residues F24, 58–60 (AFE), and 82–84 (AVI). (2S)-2-hydroxy-3-oxobutyl phosphate is bound at residue 87 to 88 (GT). The active-site Proton donor is the H90. Residue F115 coordinates 5-amino-6-(D-ribitylamino)uracil. R129 provides a ligand contact to (2S)-2-hydroxy-3-oxobutyl phosphate.

This sequence belongs to the DMRL synthase family. In terms of assembly, forms an icosahedral capsid composed of 60 subunits, arranged as a dodecamer of pentamers.

It carries out the reaction (2S)-2-hydroxy-3-oxobutyl phosphate + 5-amino-6-(D-ribitylamino)uracil = 6,7-dimethyl-8-(1-D-ribityl)lumazine + phosphate + 2 H2O + H(+). Its pathway is cofactor biosynthesis; riboflavin biosynthesis; riboflavin from 2-hydroxy-3-oxobutyl phosphate and 5-amino-6-(D-ribitylamino)uracil: step 1/2. Its function is as follows. Catalyzes the formation of 6,7-dimethyl-8-ribityllumazine by condensation of 5-amino-6-(D-ribitylamino)uracil with 3,4-dihydroxy-2-butanone 4-phosphate. This is the penultimate step in the biosynthesis of riboflavin. This Ectopseudomonas mendocina (strain ymp) (Pseudomonas mendocina) protein is 6,7-dimethyl-8-ribityllumazine synthase.